Here is a 123-residue protein sequence, read N- to C-terminus: Large ribosomal subunit protein bL12 (123 aa).

It belongs to the bacterial ribosomal protein bL12 family. In terms of assembly, homodimer. Part of the ribosomal stalk of the 50S ribosomal subunit. Forms a multimeric L10(L12)X complex, where L10 forms an elongated spine to which 2 to 4 L12 dimers bind in a sequential fashion. Binds GTP-bound translation factors.

Forms part of the ribosomal stalk which helps the ribosome interact with GTP-bound translation factors. Is thus essential for accurate translation. The chain is Large ribosomal subunit protein bL12 from Zymomonas mobilis subsp. mobilis (strain ATCC 31821 / ZM4 / CP4).